The following is a 116-amino-acid chain: Large ribosomal subunit protein bL17 (116 aa).

Belongs to the bacterial ribosomal protein bL17 family. As to quaternary structure, part of the 50S ribosomal subunit. Contacts protein L32.

The polypeptide is Large ribosomal subunit protein bL17 (Helicobacter pylori (strain J99 / ATCC 700824) (Campylobacter pylori J99)).